Consider the following 465-residue polypeptide: Ribulose bisphosphate carboxylase large chain (465 aa).

K4 bears the N6,N6,N6-trimethyllysine mark. Residues N113 and T163 each coordinate substrate. Catalysis depends on K165, which acts as the Proton acceptor. K167 lines the substrate pocket. Residues K191, D193, and E194 each contribute to the Mg(2+) site. An N6-carboxylysine modification is found at K191. The Proton acceptor role is filled by H284. R285, H317, and S369 together coordinate substrate.

The protein belongs to the RuBisCO large chain family. Type I subfamily. As to quaternary structure, heterohexadecamer of 8 large chains and 8 small chains; disulfide-linked. The disulfide link is formed within the large subunit homodimers. It depends on Mg(2+) as a cofactor. Post-translationally, the disulfide bond which can form in the large chain dimeric partners within the hexadecamer appears to be associated with oxidative stress and protein turnover.

The protein localises to the plastid. It is found in the chloroplast. It catalyses the reaction 2 (2R)-3-phosphoglycerate + 2 H(+) = D-ribulose 1,5-bisphosphate + CO2 + H2O. It carries out the reaction D-ribulose 1,5-bisphosphate + O2 = 2-phosphoglycolate + (2R)-3-phosphoglycerate + 2 H(+). In terms of biological role, ruBisCO catalyzes two reactions: the carboxylation of D-ribulose 1,5-bisphosphate, the primary event in carbon dioxide fixation, as well as the oxidative fragmentation of the pentose substrate in the photorespiration process. Both reactions occur simultaneously and in competition at the same active site. In Manilkara zapota (Sapodilla plum), this protein is Ribulose bisphosphate carboxylase large chain.